An 86-amino-acid polypeptide reads, in one-letter code: Anti-adapter protein IraP (86 aa).

Residues Met1–Met36 adopt a coiled-coil conformation.

The protein belongs to the IraP family. Interacts with RssB.

It localises to the cytoplasm. In terms of biological role, inhibits RpoS proteolysis by regulating RssB activity, thereby increasing the stability of the sigma stress factor RpoS especially during phosphate and magnesium starvation, but also in stationary phase and during nitrogen starvation. Its effect on RpoS stability is due to its interaction with RssB, which probably blocks the interaction of RssB with RpoS, and the consequent delivery of the RssB-RpoS complex to the ClpXP protein degradation pathway. The protein is Anti-adapter protein IraP of Salmonella choleraesuis (strain SC-B67).